The following is a 321-amino-acid chain: Lipoyl synthase (321 aa).

Residues Cys68, Cys73, Cys79, Cys94, Cys98, Cys101, and Ser308 each contribute to the [4Fe-4S] cluster site. Residues 80–297 enclose the Radical SAM core domain; sequence FNHGTATFMI…KAEALAMGFT (218 aa).

It belongs to the radical SAM superfamily. Lipoyl synthase family. The cofactor is [4Fe-4S] cluster.

Its subcellular location is the cytoplasm. It carries out the reaction [[Fe-S] cluster scaffold protein carrying a second [4Fe-4S](2+) cluster] + N(6)-octanoyl-L-lysyl-[protein] + 2 oxidized [2Fe-2S]-[ferredoxin] + 2 S-adenosyl-L-methionine + 4 H(+) = [[Fe-S] cluster scaffold protein] + N(6)-[(R)-dihydrolipoyl]-L-lysyl-[protein] + 4 Fe(3+) + 2 hydrogen sulfide + 2 5'-deoxyadenosine + 2 L-methionine + 2 reduced [2Fe-2S]-[ferredoxin]. It participates in protein modification; protein lipoylation via endogenous pathway; protein N(6)-(lipoyl)lysine from octanoyl-[acyl-carrier-protein]: step 2/2. Catalyzes the radical-mediated insertion of two sulfur atoms into the C-6 and C-8 positions of the octanoyl moiety bound to the lipoyl domains of lipoate-dependent enzymes, thereby converting the octanoylated domains into lipoylated derivatives. The chain is Lipoyl synthase from Escherichia fergusonii (strain ATCC 35469 / DSM 13698 / CCUG 18766 / IAM 14443 / JCM 21226 / LMG 7866 / NBRC 102419 / NCTC 12128 / CDC 0568-73).